The primary structure comprises 1044 residues: Eukaryotic translation initiation factor 3 subunit A (1044 aa).

Positions 92 to 121 (LKKFIELAEKKVTEAQAKADEIQSSLESAA) form a coiled coil. Positions 339–523 (MTKAASFVLL…GVLTFDTDIF (185 aa)) constitute a PCI domain. The stretch at 611 to 907 (IDKKKEAATD…EARRAARKAG (297 aa)) forms a coiled coil. Positions 797–901 (SEKRHEEFEK…QREEEAEARR (105 aa)) are enriched in basic and acidic residues. A disordered region spans residues 797 to 1044 (SEKRHEEFEK…WVPRWKQQQS (248 aa)). 2 stretches are compositionally biased toward low complexity: residues 943–956 (KEAA…AAPA) and 1006–1017 (SSSSQPPSRTQT).

It belongs to the eIF-3 subunit A family. Component of the eukaryotic translation initiation factor 3 (eIF-3) complex.

Its subcellular location is the cytoplasm. In terms of biological role, RNA-binding component of the eukaryotic translation initiation factor 3 (eIF-3) complex, which is involved in protein synthesis of a specialized repertoire of mRNAs and, together with other initiation factors, stimulates binding of mRNA and methionyl-tRNAi to the 40S ribosome. The eIF-3 complex specifically targets and initiates translation of a subset of mRNAs involved in cell proliferation. The sequence is that of Eukaryotic translation initiation factor 3 subunit A (tif32) from Aspergillus clavatus (strain ATCC 1007 / CBS 513.65 / DSM 816 / NCTC 3887 / NRRL 1 / QM 1276 / 107).